The sequence spans 879 residues: Alanine--tRNA ligase (879 aa).

Histidine 566, histidine 570, cysteine 668, and histidine 672 together coordinate Zn(2+).

This sequence belongs to the class-II aminoacyl-tRNA synthetase family. Zn(2+) is required as a cofactor.

Its subcellular location is the cytoplasm. The catalysed reaction is tRNA(Ala) + L-alanine + ATP = L-alanyl-tRNA(Ala) + AMP + diphosphate. Catalyzes the attachment of alanine to tRNA(Ala) in a two-step reaction: alanine is first activated by ATP to form Ala-AMP and then transferred to the acceptor end of tRNA(Ala). Also edits incorrectly charged Ser-tRNA(Ala) and Gly-tRNA(Ala) via its editing domain. This Clostridium beijerinckii (strain ATCC 51743 / NCIMB 8052) (Clostridium acetobutylicum) protein is Alanine--tRNA ligase.